The following is an 884-amino-acid chain: Pyruvate, phosphate dikinase (884 aa).

Residues 1–351 are N-terminal; it reads MSTRRVYFFG…LWMLQARAGK (351 aa). Residue Arg99 participates in ATP binding. A linker 1 region spans residues 352–408; the sequence is RTGFAMVRIAIDMCKEGMLTEEEALLRIDANKINEFLFKRFDPSVKPVVLGKGIPAS. Residues 409-507 form a central region; it reads PGAAVGVICF…KFKEGDFISI (99 aa). Position 462 is a phosphothreonine; by PDRP1 (Thr462). His464 serves as the catalytic Tele-phosphohistidine intermediate. The linker 2 stretch occupies residues 508-542; that stretch reads NGTTGEIYNGAVQTIEPGITDDLQTIMDWSDKYRV. The segment at 543–884 is C-terminal; that stretch reads LKIRTNADTP…IAAIKARTNQ (342 aa). Residues Arg570, Arg626, Glu753, Gly774, Thr775, Asn776, and Asp777 each coordinate substrate. Residue Glu753 coordinates Mg(2+). Asp777 contributes to the Mg(2+) binding site. Cys839 functions as the Proton donor in the catalytic mechanism.

The protein belongs to the PEP-utilizing enzyme family. Homodimer. The cofactor is Mg(2+). Phosphorylation of Thr-462 in the dark inactivates the enzyme. Dephosphorylation upon light stimulation reactivates the enzyme.

The enzyme catalyses pyruvate + phosphate + ATP = phosphoenolpyruvate + AMP + diphosphate + H(+). Activated by light-induced dephosphorylation. Inhibited by dark-induced phosphorylation. Both reactions are catalyzed by PDRP1. Functionally, catalyzes the reversible phosphorylation of pyruvate and phosphate. This chain is Pyruvate, phosphate dikinase, found in Giardia intestinalis (Giardia lamblia).